A 70-amino-acid polypeptide reads, in one-letter code: Large ribosomal subunit protein bL31 (70 aa).

4 residues coordinate Zn(2+): Cys16, Cys18, Cys38, and Cys41.

The protein belongs to the bacterial ribosomal protein bL31 family. Type A subfamily. In terms of assembly, part of the 50S ribosomal subunit. Requires Zn(2+) as cofactor.

Binds the 23S rRNA. This is Large ribosomal subunit protein bL31 from Bifidobacterium longum (strain DJO10A).